The sequence spans 492 residues: MO25-like protein 3 (492 aa).

A disordered region spans residues 442–492; sequence SRAGIRFGETRNVKGSPRSRSQSPRPPTGPEPSPRTTSYQNVRFPPEDSSR. The segment covering 465–474 has biased composition (pro residues); that stretch reads PRPPTGPEPS.

Belongs to the Mo25 family.

The sequence is that of MO25-like protein 3 from Caenorhabditis briggsae.